Consider the following 308-residue polypeptide: uncharacterized protein (308 aa).

Residues 158 to 221 (GDSNAETFEE…DSINHGESSE (64 aa)) are disordered. Residues 206 to 221 (RNGDRSDSINHGESSE) are compositionally biased toward basic and acidic residues.

This is an uncharacterized protein from Arabidopsis thaliana (Mouse-ear cress).